Consider the following 60-residue polypeptide: Large ribosomal subunit protein bL32A (60 aa).

Basic residues predominate over residues 1–19; that stretch reads MAVPKRRMSRSNTRSRRSQ. The tract at residues 1 to 21 is disordered; sequence MAVPKRRMSRSNTRSRRSQWK.

It belongs to the bacterial ribosomal protein bL32 family.

The sequence is that of Large ribosomal subunit protein bL32A from Nocardia farcinica (strain IFM 10152).